The primary structure comprises 1019 residues: Probable inorganic carbon transporter subunit DabA 1 (1019 aa).

C491 and D493 together coordinate Zn(2+). The interval 624 to 643 (VPTRLHSPRDEGSAAGGEGQ) is disordered. 2 residues coordinate Zn(2+): H676 and C691.

It belongs to the inorganic carbon transporter (TC 9.A.2) DabA family. In terms of assembly, forms a complex with DabB. Requires Zn(2+) as cofactor.

It localises to the cell inner membrane. Its function is as follows. Part of an energy-coupled inorganic carbon pump. The chain is Probable inorganic carbon transporter subunit DabA 1 from Sorangium cellulosum (strain So ce56) (Polyangium cellulosum (strain So ce56)).